The primary structure comprises 207 residues: uncharacterized protein (207 aa).

Positions 14-201 (ARLINQAVEI…SPVILREGSG (188 aa)) constitute a YrdC-like domain.

This sequence belongs to the SUA5 family.

This is an uncharacterized protein from Haemophilus influenzae (strain ATCC 51907 / DSM 11121 / KW20 / Rd).